The chain runs to 317 residues: Actin-related protein 2/3 complex subunit 2 (317 aa).

The protein belongs to the ARPC2 family. In terms of assembly, component of the Arp2/3 complex composed of arp2, act2, arc1/p41-ARC, arc2/p34-ARC, arc3/p21-ARC, arc4/p20-ARC and arc5/p16-ARC.

It is found in the cytoplasm. The protein resides in the cytoskeleton. It localises to the actin patch. In terms of biological role, functions as actin-binding component of the Arp2/3 complex which is involved in regulation of actin polymerization and together with an activating nucleation-promoting factor (NPF) mediates the formation of branched actin networks. Seems to contact the mother actin filament. In Schizosaccharomyces pombe (strain 972 / ATCC 24843) (Fission yeast), this protein is Actin-related protein 2/3 complex subunit 2 (arc2).